Reading from the N-terminus, the 168-residue chain is Photosystem I assembly protein Ycf3 (168 aa).

TPR repeat units lie at residues 35–68, 72–105, and 120–153; these read AFTY…EIDP, SYIL…NPSL, and GEQA…APSN.

The protein belongs to the Ycf3 family.

Its subcellular location is the plastid. The protein localises to the chloroplast thylakoid membrane. Essential for the assembly of the photosystem I (PSI) complex. May act as a chaperone-like factor to guide the assembly of the PSI subunits. The polypeptide is Photosystem I assembly protein Ycf3 (Physcomitrium patens (Spreading-leaved earth moss)).